Consider the following 319-residue polypeptide: ATP-dependent 6-phosphofructokinase (319 aa).

An ATP-binding site is contributed by Gly-11. ADP is bound at residue 21-25 (RAVVR). Residues 72–73 (RC) and 102–105 (GDGS) each bind ATP. Position 103 (Asp-103) interacts with Mg(2+). 125–127 (TID) provides a ligand contact to substrate. Asp-127 serves as the catalytic Proton acceptor. Arg-154 contributes to the ADP binding site. Substrate-binding positions include Arg-162 and 169-171 (MGR). ADP contacts are provided by residues 185–187 (GAE), Arg-211, and 213–215 (KKH). Residues Glu-222, Arg-243, and 249–252 (HIQR) contribute to the substrate site.

Belongs to the phosphofructokinase type A (PFKA) family. ATP-dependent PFK group I subfamily. Prokaryotic clade 'B1' sub-subfamily. As to quaternary structure, homotetramer. Mg(2+) is required as a cofactor.

Its subcellular location is the cytoplasm. The enzyme catalyses beta-D-fructose 6-phosphate + ATP = beta-D-fructose 1,6-bisphosphate + ADP + H(+). Its pathway is carbohydrate degradation; glycolysis; D-glyceraldehyde 3-phosphate and glycerone phosphate from D-glucose: step 3/4. Its activity is regulated as follows. Allosterically activated by ADP and other diphosphonucleosides, and allosterically inhibited by phosphoenolpyruvate. Its function is as follows. Catalyzes the phosphorylation of D-fructose 6-phosphate to fructose 1,6-bisphosphate by ATP, the first committing step of glycolysis. This is ATP-dependent 6-phosphofructokinase from Bacillus velezensis (strain DSM 23117 / BGSC 10A6 / LMG 26770 / FZB42) (Bacillus amyloliquefaciens subsp. plantarum).